The chain runs to 127 residues: Thioredoxin domain-containing protein 8 (127 aa).

Residues 2 to 127 (VQKIKSMREF…KLEEKIQELM (126 aa)) form the Thioredoxin domain. C32 and C35 are disulfide-bonded.

Belongs to the thioredoxin family. Testis-specific. Expressed in spermatozoa, sperm tail, elongated and round spermatids.

Its subcellular location is the cytoplasm. It is found in the golgi apparatus. Its function is as follows. May be required for post-translational modifications of proteins required for acrosomal biogenesis. May act by reducing disulfide bonds within the sperm. The chain is Thioredoxin domain-containing protein 8 (Txndc8) from Rattus norvegicus (Rat).